The chain runs to 455 residues: MATIPIRLQALATDQTVLKLPHPYKTEFAVRKASKASTKLPVYNLVPKPFPTRPLPFELHNDHLVFTDAIHLKSSELPPDSNNGAWARARRAPCVTLYWDGVEVPTLKQAWLVVYAFFTMRPGMDSFRLELDGNSAANLARQIKDVLLGIDHPIKARQQQEPCAKTKENTLLILRSTFWQGAGCPFGPRPVWCPQESPSSLLPSTCLSSFPLAPFHRTSTISLAGDPEDFDRCQQSWHPIRPAKPAPGSIIYSRWIPYLGEMFSMVALDPEDSEHVRLFHEWQSDPRVLQGWTETKTLDQHRRYLEALHKDPHQLTVLAKWDDSPFAYFELYWAKENRLGGYIDAGDFDRGRHSFVGDVRFRGPLRVSAWWSSLMHYLFLDDPRTMHIVGEPRDTHSTVLMYDFIHGFGLDRFIDLPSKRSAFMRCSRDRFFQSFPLEDSEKVIGGTSIRVVQKL.

Belongs to the lysine N-acyltransferase MbtK family.

Its pathway is mycotoxin biosynthesis. Its function is as follows. Putative O-acetyltransferase; part of the satratoxin SC2 cluster involved in the biosynthesis of satratoxins, trichothecene mycotoxins that are associated with human food poisonings. Satratoxins are suggested to be made by products of multiple gene clusters (SC1, SC2 and SC3) that encode 21 proteins in all, including polyketide synthases, acetyltransferases, and other enzymes expected to modify the trichothecene skeleton. SC1 encodes 10 proteins, SAT1 to SAT10. The largest are SAT8, which encodes a putative polyketide synthase (PKS) with a conventional non-reducing architecture, and SAT10, a putative protein containing four ankyrin repeats and thus may be involved in protein scaffolding. The putative short-chain reductase SAT3 may assist the PKS in some capacity. SAT6 contains a secretory lipase domain and acts probably as a trichothecene esterase. SAT5 encodes a putative acetyltransferase, and so, with SAT6, may affect endogenous protection from toxicity. The probable transcription factor SAT9 may regulate the expression of the SC1 cluster. SC2 encodes proteins SAT11 to SAT16, the largest of which encodes the putative reducing PKS SAT13. SAT11 is a cytochrome P450 monooxygenase, while SAT14 and SAT16 are probable acetyltransferases. The SC2 cluster may be regulated by the transcription factor SAT15. SC3 is a small cluster that encodes 5 proteins, SAT17 to SAT21. SAT21 is a putative MFS-type transporter which may have a role in exporting secondary metabolites. The four other proteins putatively encoded in SC3 include the taurine hydroxylase-like protein SAT17, the O-methyltransferase SAT18, the acetyltransferase SAT19, and the Cys6-type zinc finger SAT20, the latter being probably involved in regulation of SC3 expression. In Stachybotrys chartarum (strain CBS 109288 / IBT 7711) (Toxic black mold), this protein is Putative O-acetyltransferase SAT14.